A 345-amino-acid chain; its full sequence is N-acetyl-gamma-glutamyl-phosphate reductase (345 aa).

Residue C149 is part of the active site.

Belongs to the NAGSA dehydrogenase family. Type 1 subfamily.

The protein localises to the cytoplasm. It carries out the reaction N-acetyl-L-glutamate 5-semialdehyde + phosphate + NADP(+) = N-acetyl-L-glutamyl 5-phosphate + NADPH + H(+). It participates in amino-acid biosynthesis; L-arginine biosynthesis; N(2)-acetyl-L-ornithine from L-glutamate: step 3/4. Catalyzes the NADPH-dependent reduction of N-acetyl-5-glutamyl phosphate to yield N-acetyl-L-glutamate 5-semialdehyde. The sequence is that of N-acetyl-gamma-glutamyl-phosphate reductase from Bacillus cytotoxicus (strain DSM 22905 / CIP 110041 / 391-98 / NVH 391-98).